Here is a 904-residue protein sequence, read N- to C-terminus: Shieldin complex subunit 2 (904 aa).

Residues 1–60 (MSGGSQVHIFWGAPVAPLKMTVSQDTASLMSVADPWKKIHLLYSQHSLYLKDEKQHKNLE) are sufficient for interaction with SHLD3 and MAD2L2. An interaction with ASTE1 region spans residues 1–568 (MSGGSQVHIF…AYVSSKHSYL (568 aa)). Positions 721–891 (KCSGVVLIQA…LQQDFSLLDF (171 aa)) are mediates interaction with SHLD1.

This sequence belongs to the SHLD2 family. As to quaternary structure, component of the shieldin complex, consisting of SHLD1, SHLD2, SHLD3 and MAD2L2/REV7. Within the complex, SHLD2 forms a scaffold which interacts with a SHLD3-MAD2L2 subcomplex via its N-terminus, and with SHLD1 via its C-terminus. Interacts with TP53BP1. Interacts with RIF1. Interacts with ASTE1.

Its subcellular location is the chromosome. Functionally, component of the shieldin complex, which plays an important role in repair of DNA double-stranded breaks (DSBs). During G1 and S phase of the cell cycle, the complex functions downstream of TP53BP1 to promote non-homologous end joining (NHEJ) and suppress DNA end resection. Mediates various NHEJ-dependent processes including immunoglobulin class-switch recombination, and fusion of unprotected telomeres. The polypeptide is Shieldin complex subunit 2 (Pongo abelii (Sumatran orangutan)).